The primary structure comprises 585 residues: Glutamate decarboxylase (585 aa).

Positions 35-56 are enriched in polar residues; that stretch reads KSAVQSGHQGSNNMRDTSSQGM. The tract at residues 35 to 60 is disordered; the sequence is KSAVQSGHQGSNNMRDTSSQGMANKY. Lysine 318 carries the post-translational modification N6-(pyridoxal phosphate)lysine.

It belongs to the group II decarboxylase family. Pyridoxal 5'-phosphate serves as cofactor.

It carries out the reaction L-glutamate + H(+) = 4-aminobutanoate + CO2. This is Glutamate decarboxylase (GAD1) from Saccharomyces cerevisiae (strain ATCC 204508 / S288c) (Baker's yeast).